Consider the following 142-residue polypeptide: Low molecular weight protein-tyrosine-phosphatase Ptp (142 aa).

The Nucleophile role is filled by C10. Residue R16 is part of the active site. D115 serves as the catalytic Proton donor.

This sequence belongs to the low molecular weight phosphotyrosine protein phosphatase family.

It carries out the reaction O-phospho-L-tyrosyl-[protein] + H2O = L-tyrosyl-[protein] + phosphate. The protein operates within glycan metabolism; exopolysaccharide biosynthesis. Its activity is regulated as follows. Inhibited by ammonium molybdate, sodium orthovanadate, N-ethylmaleimide and iodoacetic acid. Its function is as follows. Dephosphorylates ptk. May be involved in the production and the transport of exopolysaccharides. This is Low molecular weight protein-tyrosine-phosphatase Ptp (ptp) from Acinetobacter johnsonii.